The primary structure comprises 745 residues: UPF0508 protein YJR030C (745 aa).

This sequence belongs to the UPF0508 family.

The sequence is that of UPF0508 protein YJR030C from Saccharomyces cerevisiae (strain ATCC 204508 / S288c) (Baker's yeast).